Here is a 550-residue protein sequence, read N- to C-terminus: Glucose-6-phosphate isomerase (550 aa).

Glutamate 356 (proton donor) is an active-site residue. Catalysis depends on residues histidine 387 and lysine 515.

It belongs to the GPI family.

Its subcellular location is the cytoplasm. It catalyses the reaction alpha-D-glucose 6-phosphate = beta-D-fructose 6-phosphate. Its pathway is carbohydrate biosynthesis; gluconeogenesis. The protein operates within carbohydrate degradation; glycolysis; D-glyceraldehyde 3-phosphate and glycerone phosphate from D-glucose: step 2/4. Its function is as follows. Catalyzes the reversible isomerization of glucose-6-phosphate to fructose-6-phosphate. This is Glucose-6-phosphate isomerase from Vibrio cholerae serotype O1 (strain ATCC 39315 / El Tor Inaba N16961).